The following is a 308-amino-acid chain: Acetyl-coenzyme A carboxylase carboxyl transferase subunit beta (308 aa).

The CoA carboxyltransferase N-terminal domain occupies 46–308 (LWVKCPDTGE…LMMGRGLKAA (263 aa)).

It belongs to the AccD/PCCB family. In terms of assembly, acetyl-CoA carboxylase is a heterohexamer composed of biotin carboxyl carrier protein (AccB), biotin carboxylase (AccC) and two subunits each of ACCase subunit alpha (AccA) and ACCase subunit beta (AccD).

It is found in the cytoplasm. The catalysed reaction is N(6)-carboxybiotinyl-L-lysyl-[protein] + acetyl-CoA = N(6)-biotinyl-L-lysyl-[protein] + malonyl-CoA. It participates in lipid metabolism; malonyl-CoA biosynthesis; malonyl-CoA from acetyl-CoA: step 1/1. Functionally, component of the acetyl coenzyme A carboxylase (ACC) complex. Biotin carboxylase (BC) catalyzes the carboxylation of biotin on its carrier protein (BCCP) and then the CO(2) group is transferred by the transcarboxylase to acetyl-CoA to form malonyl-CoA. In Caulobacter sp. (strain K31), this protein is Acetyl-coenzyme A carboxylase carboxyl transferase subunit beta.